The sequence spans 313 residues: Probable WRKY transcription factor 41 (313 aa).

Positions Gly135–Gly203 form a DNA-binding region, WRKY.

Belongs to the WRKY group III family.

It localises to the nucleus. Transcription factor. Interacts specifically with the W box (5'-(T)TGAC[CT]-3'), a frequently occurring elicitor-responsive cis-acting element. The polypeptide is Probable WRKY transcription factor 41 (WRKY41) (Arabidopsis thaliana (Mouse-ear cress)).